Here is a 98-residue protein sequence, read N- to C-terminus: NADH-ubiquinone oxidoreductase chain 4L (98 aa).

3 helical membrane passes run 1-21 (MSMM…GLLM), 29-49 (SLLC…VTIL), and 61-81 (IILL…LVMV).

The protein belongs to the complex I subunit 4L family. Core subunit of respiratory chain NADH dehydrogenase (Complex I) which is composed of 45 different subunits.

It is found in the mitochondrion inner membrane. The catalysed reaction is a ubiquinone + NADH + 5 H(+)(in) = a ubiquinol + NAD(+) + 4 H(+)(out). Its function is as follows. Core subunit of the mitochondrial membrane respiratory chain NADH dehydrogenase (Complex I) which catalyzes electron transfer from NADH through the respiratory chain, using ubiquinone as an electron acceptor. Part of the enzyme membrane arm which is embedded in the lipid bilayer and involved in proton translocation. The polypeptide is NADH-ubiquinone oxidoreductase chain 4L (MT-ND4L) (Zalophus californianus (California sealion)).